Reading from the N-terminus, the 349-residue chain is Protein FAM98C (349 aa).

The segment at 313-349 (PDRGGRPNELEPPMPTWRSRREDGGPQCWGRKKKKKK) is disordered.

Belongs to the FAM98 family.

In Homo sapiens (Human), this protein is Protein FAM98C (FAM98C).